A 576-amino-acid chain; its full sequence is TOX high mobility group box family member 3 (576 aa).

Disordered regions lie at residues 189 to 258 (NLGG…PQKP), 422 to 443 (TMVGSAPSTQVSPSVQTQQHQM), and 519 to 563 (LQHM…QIQS). Residues 204-215 (ASKSATPSPSSS) are compositionally biased toward low complexity. Residues 223–239 (EANRAIGEKRAAPDSGK) are compositionally biased toward basic and acidic residues. A compositionally biased stretch (basic residues) spans 240 to 250 (KPKTPKKKKKK). Residues 255 to 323 (PQKPVSAYAL…EYLKALAAYR (69 aa)) constitute a DNA-binding region (HMG box). A compositionally biased stretch (low complexity) spans 428-443 (PSTQVSPSVQTQQHQM). Positions 528–542 (PSPRQHSPVASQITS) are enriched in polar residues. The segment covering 549–563 (SPQPASQQHQSQIQS) has biased composition (low complexity).

Homodimer. Interacts with CREB1; the interaction is not depolarization dependent. Interacts with CREBBP (via C-terminus). Interacts (via HGM box) with CITED1 (via C-terminus); the interaction increases estrogen-response element (ERE)-dependent transcription and protection against cell death. Interacts with CREB1 (phosphorylated form). In terms of tissue distribution, expressed mainly in epithelial cells. Expressed in the central nervous system (CNS), in the ileum and within the brain in the frontal and occipital lobe.

The protein localises to the nucleus. In terms of biological role, transcriptional coactivator of the p300/CBP-mediated transcription complex. Activates transactivation through cAMP response element (CRE) sites. Protects against cell death by inducing antiapoptotic and repressing pro-apoptotic transcripts. Stimulates transcription from the estrogen-responsive or BCL-2 promoters. Required for depolarization-induced transcription activation of the C-FOS promoter in neurons. Associates with chromatin to the estrogen-responsive C3 promoter region. In Homo sapiens (Human), this protein is TOX high mobility group box family member 3 (TOX3).